The sequence spans 114 residues: UPF0102 protein Shew_0226 (114 aa).

It belongs to the UPF0102 family.

The polypeptide is UPF0102 protein Shew_0226 (Shewanella loihica (strain ATCC BAA-1088 / PV-4)).